Here is a 302-residue protein sequence, read N- to C-terminus: Glutaminase (302 aa).

S61, N111, E155, N162, Y186, Y238, and V256 together coordinate substrate.

It belongs to the glutaminase family. In terms of assembly, homotetramer.

The enzyme catalyses L-glutamine + H2O = L-glutamate + NH4(+). The protein is Glutaminase of Pseudomonas aeruginosa (strain ATCC 15692 / DSM 22644 / CIP 104116 / JCM 14847 / LMG 12228 / 1C / PRS 101 / PAO1).